Reading from the N-terminus, the 268-residue chain is MRLEIENGLEFVNDPVVNELGKICFFHPFTGNLTNKLSFRSHFNRYSFYAINYPGHGNSVINNPKQLEFSYWLEITKQFFDKHNLKDVILFGHSIGGGLAVALTNYLSSDQYKAVLLEAPLNPAIVETPLNIVQNLIPDPDSDFAVIQKCLVYNIEKKLGANFKEYCEREKQKSIHQNQRLKVMLEPSTLKQNIVLINAAFLKLNCPALWIHGKQDGIIKYLPSKAYYESLNNKQIQFKAIEAAAHTPYFEQPQKFLSLVNDFFQLIS.

Residue histidine 27 is part of the active site. Serine 94 functions as the Charge relay system in the catalytic mechanism.

It belongs to the lipase/esterase LIP3/BchO family.

This is Putative esterase/lipase 1 from Mycoplasma genitalium (strain ATCC 33530 / DSM 19775 / NCTC 10195 / G37) (Mycoplasmoides genitalium).